We begin with the raw amino-acid sequence, 460 residues long: Chromosomal replication initiator protein DnaA 1 (460 aa).

Residues 1–68 (MRAWEEFLLL…KSGLVNNNNK (68 aa)) are domain I, interacts with DnaA modulators. The interval 68 to 102 (KPIRVHVTSVDKAAPFYKEKQMQQEKTAYFTMHYG) is domain II. Residues 103-321 (SVNPEMTFSN…HALNLLAKRV (219 aa)) are domain III, AAA+ region. Positions 151, 153, 154, and 155 each coordinate ATP. The domain IV, binds dsDNA stretch occupies residues 322–460 (MYKKLSHQLL…EFFPSEEMII (139 aa)).

This sequence belongs to the DnaA family. Oligomerizes as a right-handed, spiral filament on DNA at oriC.

It localises to the cytoplasm. Its function is as follows. Plays an essential role in the initiation and regulation of chromosomal replication. ATP-DnaA binds to the origin of replication (oriC) to initiate formation of the DNA replication initiation complex once per cell cycle. Binds the DnaA box (a 9 base pair repeat at the origin) and separates the double-stranded (ds)DNA. Forms a right-handed helical filament on oriC DNA; dsDNA binds to the exterior of the filament while single-stranded (ss)DNA is stabiized in the filament's interior. The ATP-DnaA-oriC complex binds and stabilizes one strand of the AT-rich DNA unwinding element (DUE), permitting loading of DNA polymerase. After initiation quickly degrades to an ADP-DnaA complex that is not apt for DNA replication. Binds acidic phospholipids. The sequence is that of Chromosomal replication initiator protein DnaA 1 from Chlamydia pneumoniae (Chlamydophila pneumoniae).